The primary structure comprises 31 residues: Nemertide alpha-2 (31 aa).

Intrachain disulfides connect cysteine 2–cysteine 16, cysteine 9–cysteine 20, and cysteine 15–cysteine 26. 2 positions are modified to 4-hydroxyproline: proline 28 and proline 29.

It belongs to the nemertide family. As to expression, confined to the epidermis and to the mucus layer.

It is found in the secreted. In terms of biological role, toxin with similar potency against both insect and mammalian sodium channels (Nav). Delays the inactivation of most Nav channels tested (B.germanica (BgNav1); EC(50)=87.2 nM, human Nav1.1/SCN1A; EC(50)=125.8 nM, rat Nav1.2/SCN2A; EC(50)=97.9 nM, rat Nav1.3/SCN3A; EC(50)=127.7 nM, rat Nav1.4/SCN4A; EC(50)=1150.3 nM, human Nav1.5/SCN5A; EC(50)=149.2 nM, mouse Nav1.6/SCN8A; EC(50)=1361.8 nM, human Nav1.9/SCN9A; EC(50)=1296.7 nM). Inactivation is completely prevented by a concentration of 1 uM, resulting in sustained, non-inactivating current. In addition, the toxin significantly enhances the recovery from inactivation, and the open state is not required for the toxin to interact with the channel. In vivo, injection into brine shrimp (Artemia salina) stops movement or causes death after 24 hours (EC(50)=2.9 uM). This is Nemertide alpha-2 from Lineus longissimus (Bootlace worm).